The following is a 329-amino-acid chain: Ig gamma-2C chain C region (329 aa).

Residues 1-97 are CH1; the sequence is ARTTAPSVYP…ATKSNLIKRI (97 aa). C27 and C82 form a disulfide bridge. Positions 98 to 113 are hinge; sequence EPRRPKPRPPTDICSC. The CH2 stretch occupies residues 114 to 222; that stretch reads DDNLGRPSVF…PIEKTISKPR (109 aa). Intrachain disulfides connect C143-C203 and C249-C307. Residues 223–329 are CH3; it reads GKARTPQVYT…QKNLSRSPGK (107 aa).

The sequence is that of Ig gamma-2C chain C region from Rattus norvegicus (Rat).